The following is a 310-amino-acid chain: HPr kinase/phosphorylase (310 aa).

Residues His138 and Lys159 contribute to the active site. 153–160 (GDSGIGKS) contacts ATP. A Mg(2+)-binding site is contributed by Ser160. The Proton acceptor; for phosphorylation activity. Proton donor; for dephosphorylation activity role is filled by Asp177. Residues 201–210 (LEIRGVGIID) form an important for the catalytic mechanism of both phosphorylation and dephosphorylation region. Glu202 lines the Mg(2+) pocket. Arg243 is an active-site residue. Residues 264-269 (PVKTGR) are important for the catalytic mechanism of dephosphorylation.

The protein belongs to the HPrK/P family. In terms of assembly, homohexamer. It depends on Mg(2+) as a cofactor.

The catalysed reaction is [HPr protein]-L-serine + ATP = [HPr protein]-O-phospho-L-serine + ADP + H(+). The enzyme catalyses [HPr protein]-O-phospho-L-serine + phosphate + H(+) = [HPr protein]-L-serine + diphosphate. Catalyzes the ATP- as well as the pyrophosphate-dependent phosphorylation of a specific serine residue in HPr, a phosphocarrier protein of the phosphoenolpyruvate-dependent sugar phosphotransferase system (PTS). HprK/P also catalyzes the pyrophosphate-producing, inorganic phosphate-dependent dephosphorylation (phosphorolysis) of seryl-phosphorylated HPr (P-Ser-HPr). The two antagonistic activities of HprK/P are regulated by several intracellular metabolites, which change their concentration in response to the absence or presence of rapidly metabolisable carbon sources (glucose, fructose, etc.) in the growth medium. Therefore, by controlling the phosphorylation state of HPr, HPrK/P is a sensor enzyme that plays a major role in the regulation of carbon metabolism and sugar transport: it mediates carbon catabolite repression (CCR), and regulates PTS-catalyzed carbohydrate uptake and inducer exclusion. This Streptococcus uberis (strain ATCC BAA-854 / 0140J) protein is HPr kinase/phosphorylase.